We begin with the raw amino-acid sequence, 715 residues long: Fatty acid oxidation complex subunit alpha (715 aa).

The enoyl-CoA hydratase/isomerase stretch occupies residues 1–190 (MIYEGKAITV…KVSAVDAVVT (190 aa)). Residue Asp297 participates in substrate binding. Residues 312 to 715 (KDVKQAAVLG…MAKNGQSFFG (404 aa)) are 3-hydroxyacyl-CoA dehydrogenase. NAD(+) is bound by residues Met325, Asp344, 401-403 (VVE), Lys408, and Ser430. His451 serves as the catalytic For 3-hydroxyacyl-CoA dehydrogenase activity. Residue Asn454 coordinates NAD(+). Substrate is bound by residues Asn501 and Tyr660.

In the N-terminal section; belongs to the enoyl-CoA hydratase/isomerase family. It in the C-terminal section; belongs to the 3-hydroxyacyl-CoA dehydrogenase family. As to quaternary structure, heterotetramer of two alpha chains (FadB) and two beta chains (FadA).

The catalysed reaction is a (3S)-3-hydroxyacyl-CoA + NAD(+) = a 3-oxoacyl-CoA + NADH + H(+). It carries out the reaction a (3S)-3-hydroxyacyl-CoA = a (2E)-enoyl-CoA + H2O. It catalyses the reaction a 4-saturated-(3S)-3-hydroxyacyl-CoA = a (3E)-enoyl-CoA + H2O. The enzyme catalyses (3S)-3-hydroxybutanoyl-CoA = (3R)-3-hydroxybutanoyl-CoA. The catalysed reaction is a (3Z)-enoyl-CoA = a 4-saturated (2E)-enoyl-CoA. It carries out the reaction a (3E)-enoyl-CoA = a 4-saturated (2E)-enoyl-CoA. It participates in lipid metabolism; fatty acid beta-oxidation. Involved in the aerobic and anaerobic degradation of long-chain fatty acids via beta-oxidation cycle. Catalyzes the formation of 3-oxoacyl-CoA from enoyl-CoA via L-3-hydroxyacyl-CoA. It can also use D-3-hydroxyacyl-CoA and cis-3-enoyl-CoA as substrate. In Pseudomonas fragi, this protein is Fatty acid oxidation complex subunit alpha.